The chain runs to 627 residues: Altered inheritance of mitochondria protein 9, mitochondrial (627 aa).

The N-terminal 43 residues, 1–43 (MIRYTVAGHSRRCVVGASKRVGAIKCITVAATKRFISNKPNEV), are a transit peptide targeting the mitochondrion.

It belongs to the AIM9 family.

The protein localises to the mitochondrion. This Saccharomyces cerevisiae (strain ATCC 204508 / S288c) (Baker's yeast) protein is Altered inheritance of mitochondria protein 9, mitochondrial (AIM9).